We begin with the raw amino-acid sequence, 120 residues long: NAD(P)H-quinone oxidoreductase subunit 3, chloroplastic (120 aa).

3 helical membrane-spanning segments follow: residues 9–29, 64–84, and 88–108; these read IFWA…IISG, MFAL…PWAM, and VLGV…IVGS.

Belongs to the complex I subunit 3 family. In terms of assembly, NDH is composed of at least 16 different subunits, 5 of which are encoded in the nucleus.

It localises to the plastid. The protein resides in the chloroplast thylakoid membrane. It catalyses the reaction a plastoquinone + NADH + (n+1) H(+)(in) = a plastoquinol + NAD(+) + n H(+)(out). It carries out the reaction a plastoquinone + NADPH + (n+1) H(+)(in) = a plastoquinol + NADP(+) + n H(+)(out). Functionally, NDH shuttles electrons from NAD(P)H:plastoquinone, via FMN and iron-sulfur (Fe-S) centers, to quinones in the photosynthetic chain and possibly in a chloroplast respiratory chain. The immediate electron acceptor for the enzyme in this species is believed to be plastoquinone. Couples the redox reaction to proton translocation, and thus conserves the redox energy in a proton gradient. This is NAD(P)H-quinone oxidoreductase subunit 3, chloroplastic from Lemna minor (Common duckweed).